A 298-amino-acid polypeptide reads, in one-letter code: Elongation factor Ts (298 aa).

Positions 80–83 are involved in Mg(2+) ion dislocation from EF-Tu; the sequence is TDFV.

This sequence belongs to the EF-Ts family.

Its subcellular location is the cytoplasm. Associates with the EF-Tu.GDP complex and induces the exchange of GDP to GTP. It remains bound to the aminoacyl-tRNA.EF-Tu.GTP complex up to the GTP hydrolysis stage on the ribosome. This chain is Elongation factor Ts, found in Paracidovorax citrulli (strain AAC00-1) (Acidovorax citrulli).